The sequence spans 323 residues: MFEQENWQPSASIENLLARAKIIAEIRRFFTDRGLLEVETPVLSEFGVTDVHLSTFNTTFISPTAEKSKALWLSTSPEYHMKRLLAAGSGPIFQLCHVFRNEEAGQRHNPEFTMLEWYRPHFDMYRLINEVDDLLQQILDCKPTESLSYQFVFQEYVGLDPLSAEKAELVAKAKQYHLQQAEQEDRDTLLQFLFSTVVEPNIGKENPVAVYHFPATQAALAQISSEDHRVAERFEFYYKGLELANGFHELTDVNEQLHRFEQDNVQRQKMGLPQRQIDKRLLGALQAGVPNCSGIALGVDRLLMIALGANAIHEVMAFGIENA.

76-78 (SPE) provides a ligand contact to substrate. Residues 100–102 (RNE) and Asn109 each bind ATP. Tyr118 serves as a coordination point for substrate. 242 to 243 (EL) serves as a coordination point for ATP. Glu249 contacts substrate. Gly298 is a binding site for ATP.

The protein belongs to the class-II aminoacyl-tRNA synthetase family. EpmA subfamily. As to quaternary structure, homodimer.

It carries out the reaction D-beta-lysine + L-lysyl-[protein] + ATP = N(6)-((3R)-3,6-diaminohexanoyl)-L-lysyl-[protein] + AMP + diphosphate + H(+). In terms of biological role, with EpmB is involved in the beta-lysylation step of the post-translational modification of translation elongation factor P (EF-P). Catalyzes the ATP-dependent activation of (R)-beta-lysine produced by EpmB, forming a lysyl-adenylate, from which the beta-lysyl moiety is then transferred to the epsilon-amino group of a conserved specific lysine residue in EF-P. The polypeptide is Elongation factor P--(R)-beta-lysine ligase (Pasteurella multocida (strain Pm70)).